A 95-amino-acid polypeptide reads, in one-letter code: Cliotide T5 (95 aa).

Residues Gly1–Asn30 constitute a cross-link (cyclopeptide (Gly-Asn)). Cystine bridges form between Cys4/Cys20, Cys8/Cys22, and Cys13/Cys27. A propeptide spans His31–Asn95 (removed in mature form).

Contains 3 disulfide bonds. Post-translationally, this is a cyclic peptide. Expressed in stem, shoot, root, leaf, pod and nodule but not in flower and seed (at protein level).

Its function is as follows. Probably participates in a plant defense mechanism. This chain is Cliotide T5, found in Clitoria ternatea (Butterfly pea).